We begin with the raw amino-acid sequence, 157 residues long: Ribosome maturation factor RimP (157 aa).

This sequence belongs to the RimP family.

It is found in the cytoplasm. In terms of biological role, required for maturation of 30S ribosomal subunits. This is Ribosome maturation factor RimP from Bacillus licheniformis (strain ATCC 14580 / DSM 13 / JCM 2505 / CCUG 7422 / NBRC 12200 / NCIMB 9375 / NCTC 10341 / NRRL NRS-1264 / Gibson 46).